A 189-amino-acid polypeptide reads, in one-letter code: Large ribosomal subunit protein bL9 (189 aa).

Belongs to the bacterial ribosomal protein bL9 family.

Binds to the 23S rRNA. The protein is Large ribosomal subunit protein bL9 of Beijerinckia indica subsp. indica (strain ATCC 9039 / DSM 1715 / NCIMB 8712).